Reading from the N-terminus, the 405-residue chain is Acetylornithine aminotransferase (405 aa).

Pyridoxal 5'-phosphate-binding positions include 107–108 and phenylalanine 140; that span reads GA. Arginine 143 serves as a coordination point for N(2)-acetyl-L-ornithine. 225–228 contacts pyridoxal 5'-phosphate; it reads DEVQ. Lysine 254 carries the N6-(pyridoxal phosphate)lysine modification. N(2)-acetyl-L-ornithine is bound at residue serine 282. Threonine 283 contributes to the pyridoxal 5'-phosphate binding site.

This sequence belongs to the class-III pyridoxal-phosphate-dependent aminotransferase family. ArgD subfamily. Homodimer. Requires pyridoxal 5'-phosphate as cofactor.

The protein resides in the cytoplasm. The catalysed reaction is N(2)-acetyl-L-ornithine + 2-oxoglutarate = N-acetyl-L-glutamate 5-semialdehyde + L-glutamate. It participates in amino-acid biosynthesis; L-arginine biosynthesis; N(2)-acetyl-L-ornithine from L-glutamate: step 4/4. This is Acetylornithine aminotransferase from Shewanella oneidensis (strain ATCC 700550 / JCM 31522 / CIP 106686 / LMG 19005 / NCIMB 14063 / MR-1).